A 146-amino-acid polypeptide reads, in one-letter code: D-aminoacyl-tRNA deacylase (146 aa).

Residues 137 to 138 (GP) carry the Gly-cisPro motif, important for rejection of L-amino acids motif.

This sequence belongs to the DTD family. Homodimer.

The protein localises to the cytoplasm. The enzyme catalyses glycyl-tRNA(Ala) + H2O = tRNA(Ala) + glycine + H(+). The catalysed reaction is a D-aminoacyl-tRNA + H2O = a tRNA + a D-alpha-amino acid + H(+). An aminoacyl-tRNA editing enzyme that deacylates mischarged D-aminoacyl-tRNAs. Also deacylates mischarged glycyl-tRNA(Ala), protecting cells against glycine mischarging by AlaRS. Acts via tRNA-based rather than protein-based catalysis; rejects L-amino acids rather than detecting D-amino acids in the active site. By recycling D-aminoacyl-tRNA to D-amino acids and free tRNA molecules, this enzyme counteracts the toxicity associated with the formation of D-aminoacyl-tRNA entities in vivo and helps enforce protein L-homochirality. This is D-aminoacyl-tRNA deacylase from Psychrobacter sp. (strain PRwf-1).